A 348-amino-acid polypeptide reads, in one-letter code: Photosystem II protein D1 (348 aa).

3 consecutive transmembrane segments (helical) span residues 33 to 50 (YIGW…LATV), 122 to 137 (HFIF…EWEF), and 146 to 160 (WIFV…AASA). Chlorophyll a is bound at residue His122. A pheophytin a-binding site is contributed by Tyr130. Asp174 and Glu193 together coordinate [CaMn4O5] cluster. A helical membrane pass occupies residues 201–222 (FHILGVAAVFGGSLFSAMHGSL). His202 contributes to the chlorophyll a binding site. A quinone-binding positions include His219 and 268-269 (SF). A Fe cation-binding site is contributed by His219. His276 is a Fe cation binding site. The chain crosses the membrane as a helical span at residues 278–292 (FLAAWPVIGIWFTSL). Positions 336, 337, 346, and 348 each coordinate [CaMn4O5] cluster.

It belongs to the reaction center PufL/M/PsbA/D family. In terms of assembly, PSII is composed of 1 copy each of membrane proteins PsbA, PsbB, PsbC, PsbD, PsbE, PsbF, PsbH, PsbI, PsbJ, PsbK, PsbL, PsbM, PsbT, PsbX, PsbY, PsbZ, Psb30/Ycf12, at least 3 peripheral proteins of the oxygen-evolving complex and a large number of cofactors. It forms dimeric complexes. The D1/D2 heterodimer binds P680, chlorophylls that are the primary electron donor of PSII, and subsequent electron acceptors. It shares a non-heme iron and each subunit binds pheophytin, quinone, additional chlorophylls, carotenoids and lipids. D1 provides most of the ligands for the Mn4-Ca-O5 cluster of the oxygen-evolving complex (OEC). There is also a Cl(-1) ion associated with D1 and D2, which is required for oxygen evolution. The PSII complex binds additional chlorophylls, carotenoids and specific lipids. is required as a cofactor. Tyr-165 forms a radical intermediate that is referred to as redox-active TyrZ, YZ or Y-Z.

The protein resides in the plastid. It localises to the chloroplast thylakoid membrane. It carries out the reaction 2 a plastoquinone + 4 hnu + 2 H2O = 2 a plastoquinol + O2. Photosystem II (PSII) is a light-driven water:plastoquinone oxidoreductase that uses light energy to abstract electrons from H(2)O, generating O(2) and a proton gradient subsequently used for ATP formation. It consists of a core antenna complex that captures photons, and an electron transfer chain that converts photonic excitation into a charge separation. The D1/D2 (PsbA/PsbD) reaction center heterodimer binds P680, the primary electron donor of PSII as well as several subsequent electron acceptors. In Heterocapsa triquetra (Dinoflagellate), this protein is Photosystem II protein D1.